A 56-amino-acid chain; its full sequence is Small ribosomal subunit protein uS14 (56 aa).

4 residues coordinate Zn(2+): Cys21, Cys24, Cys39, and Cys42.

This sequence belongs to the universal ribosomal protein uS14 family. In terms of assembly, component of the 40S small ribosomal subunit. The cofactor is Zn(2+).

It is found in the cytoplasm. Its subcellular location is the cytosol. It localises to the rough endoplasmic reticulum. This chain is Small ribosomal subunit protein uS14 (RpS29), found in Ixodes scapularis (Black-legged tick).